Consider the following 81-residue polypeptide: ATP synthase subunit c (81 aa).

The next 2 membrane-spanning stretches (helical) occupy residues 6 to 26 (ASAS…GPGI) and 57 to 77 (LAFM…LLFA).

This sequence belongs to the ATPase C chain family. In terms of assembly, F-type ATPases have 2 components, F(1) - the catalytic core - and F(0) - the membrane proton channel. F(1) has five subunits: alpha(3), beta(3), gamma(1), delta(1), epsilon(1). F(0) has four main subunits: a(1), b(1), b'(1) and c(10-14). The alpha and beta chains form an alternating ring which encloses part of the gamma chain. F(1) is attached to F(0) by a central stalk formed by the gamma and epsilon chains, while a peripheral stalk is formed by the delta, b and b' chains.

The protein resides in the cellular thylakoid membrane. Functionally, f(1)F(0) ATP synthase produces ATP from ADP in the presence of a proton or sodium gradient. F-type ATPases consist of two structural domains, F(1) containing the extramembraneous catalytic core and F(0) containing the membrane proton channel, linked together by a central stalk and a peripheral stalk. During catalysis, ATP synthesis in the catalytic domain of F(1) is coupled via a rotary mechanism of the central stalk subunits to proton translocation. Key component of the F(0) channel; it plays a direct role in translocation across the membrane. A homomeric c-ring of between 10-14 subunits forms the central stalk rotor element with the F(1) delta and epsilon subunits. This is ATP synthase subunit c from Gloeothece citriformis (strain PCC 7424) (Cyanothece sp. (strain PCC 7424)).